Reading from the N-terminus, the 424-residue chain is Probable ribonuclease FAU-1 (424 aa).

The protein belongs to the FAU-1 family.

Functionally, probable RNase involved in rRNA stability through maturation and/or degradation of precursor rRNAs. Binds to RNA in loop regions with AU-rich sequences. The protein is Probable ribonuclease FAU-1 of Saccharolobus islandicus (strain L.S.2.15 / Lassen #1) (Sulfolobus islandicus).